A 253-amino-acid polypeptide reads, in one-letter code: Eukaryotic initiation factor 4A-6 (253 aa).

A Helicase ATP-binding domain is found at 1-82; that stretch reads HVVVGTPGRV…RKFMNKPVRI (82 aa). The DEAD box signature appears at 30 to 33; that stretch reads DEAD. Positions 93–253 constitute a Helicase C-terminal domain; the sequence is GIKQFYVNVD…EELPANVADL (161 aa).

This sequence belongs to the DEAD box helicase family. eIF4A subfamily. EIF4F is a multi-subunit complex, the composition of which varies with external and internal environmental conditions. It is composed of at least EIF4A, EIF4E and EIF4G.

It catalyses the reaction ATP + H2O = ADP + phosphate + H(+). ATP-dependent RNA helicase which is a subunit of the eIF4F complex involved in cap recognition and is required for mRNA binding to ribosome. In the current model of translation initiation, eIF4A unwinds RNA secondary structures in the 5'-UTR of mRNAs which is necessary to allow efficient binding of the small ribosomal subunit, and subsequent scanning for the initiator codon. This chain is Eukaryotic initiation factor 4A-6, found in Nicotiana tabacum (Common tobacco).